Here is an 831-residue protein sequence, read N- to C-terminus: MQGAVIVLVLFGITSGGEALHLLHLPATSNVAENAPPATLVHKFSVNLSVSLSPVIPGFPLVVNPRPFTEAFRVNRLSATNFEVVTTGKEQLDFERGPKAFDLQIYVKDDVGVTDVQVLTVQVTDVNEPPQFQGILAQGLNLYVIERTNPGFIYQVEAFDPEDTSRSIPLGYFLISPSKNFRMSANGTLFSTTELDFEAGHKSFNLLVGVRDSGNLEASTALQVTIVNINDETPRFTSPRRVYSVPEEVPLGTMVANITAMDPDDEGFPGRLLYSITTTSSYFMVDQLTGTIQVARRLDRDAGELRQNPIISLEVRVRDRPSGGQENRMQITFIVEDINDNPATCRKLTFSIMLPERTANGTLLLDLNKFCFDDDSEAPNNKFNFTTPSGAGSSRRFSQHPAGSGRIVLTGDLDYENPSNLAVGNVYNVMIQVQDAAPPYYKKSIYISILTRPENEFPLIFERPSYVFDVPERRPARTQIGQVRATDADFPRTPVVYSVSRGGSSLQYPNIFWINPKTGELQLITQADHETTSVYILTVEATNGEDRSSVTVTVNILGENDEKPVCTPNFYFMAIPVDLKVGTNIQNFKLTCTDLDSSPSSFRYSIGSGNINNHFTFSPNAGSNITRLLLASRFDYSSLDTVWDYQLLVHITDDNLLSGSTKAKALVETGTVTLSVKVIPHPTTTITTPRPRITYQIRRENVYSTSAWYVPFIVTLGSILLLGLLGSLMVLLSKAVYRHCSSTTRRDRKPLTKKRDTKRMNREAMVESIQMNSVFDGEAVDPVTGEIYEFNSKTGARRWKGPLTQLPNWPEPSTQHRGTAGEAPVPKHTGR.

The N-terminal stretch at 1-19 (MQGAVIVLVLFGITSGGEA) is a signal peptide. The Extracellular segment spans residues 20 to 711 (LHLLHLPATS…VYSTSAWYVP (692 aa)). 6 consecutive Cadherin domains span residues 24–132 (HLPA…PPQF), 136–236 (LAQG…TPRF), 237–344 (TSPR…NPAT), 346–466 (RKLT…RPSY), 462–570 (ERPS…TPNF), and 567–693 (TPNF…RPRI). 3 N-linked (GlcNAc...) asparagine glycosylation sites follow: asparagine 47, asparagine 186, and asparagine 257. The chain crosses the membrane as a helical span at residues 712 to 732 (FIVTLGSILLLGLLGSLMVLL). Over 733 to 831 (SKAVYRHCSS…EAPVPKHTGR (99 aa)) the chain is Cytoplasmic. Disordered stretches follow at residues 743 to 763 (TTRRDRKPLTKKRDTKRMNRE) and 798 to 831 (RWKGPLTQLPNWPEPSTQHRGTAGEAPVPKHTGR). Over residues 749–763 (KPLTKKRDTKRMNRE) the composition is skewed to basic and acidic residues. The span at 805–817 (QLPNWPEPSTQHR) shows a compositional bias: polar residues.

Its subcellular location is the cell membrane. Its function is as follows. Cadherins are calcium-dependent cell adhesion proteins. They preferentially interact with themselves in a homophilic manner in connecting cells; cadherins may thus contribute to the sorting of heterogeneous cell types. In Mus musculus (Mouse), this protein is Cadherin-related family member 3 (Cdhr3).